Consider the following 320-residue polypeptide: Aminoacyl tRNA synthase complex-interacting multifunctional protein 2 (320 aa).

At Ser-36 the chain carries Phosphoserine. An interaction with PRKN region spans residues 82 to 162; that stretch reads TPDADLDVTN…HTHSAVRSVP (81 aa). The tract at residues 162–225 is interaction with TP53; that stretch reads PANLLQCFGE…FLFSLFGQKQ (64 aa). A GST C-terminal domain is found at 220-317; the sequence is LFGQKQDAVN…NLAPFHTALK (98 aa).

As to quaternary structure, part of the multisynthetase complex (MSC), a multisubunit complex that groups tRNA ligases for Arg (RARS1), Asp (DARS1), Gln (QARS1), Ile (IARS1), Leu (LARS1), Lys (KARS1), Met (MARS1) the bifunctional ligase for Glu and Pro (EPRS1) and the auxiliary subunits AIMP1/p43, AIMP2/p38 and EEF1E1/p18. Interacts (via N-terminus) with KARS1. Interacts with EPRS1. Forms a linear complex that contains MARS1, EEF1E1, EPRS1 and AIMP2 that is at the core of the multisubunit complex. Binds FUBP1 (via C-terminus). Interacts in both its unphosphorylated and phosphorylated forms with p53/TP53 (via N-terminus) in the nucleus following UV irradiation. Interacts (via N-terminus) with PRKN/parkin (via first RING-type domain). Interacts with TARS3. In terms of processing, phosphorylated on serine residues in response to UV irradiation. Ubiquitinated by PRKN, leading to its degradation by the proteasome.

It is found in the cytoplasm. The protein localises to the cytosol. It localises to the nucleus. Its function is as follows. Required for assembly and stability of the aminoacyl-tRNA synthase complex. Mediates ubiquitination and degradation of FUBP1, a transcriptional activator of MYC, leading to MYC down-regulation which is required for aveolar type II cell differentiation. Blocks MDM2-mediated ubiquitination and degradation of p53/TP53. Functions as a proapoptotic factor. This Bos taurus (Bovine) protein is Aminoacyl tRNA synthase complex-interacting multifunctional protein 2 (AIMP2).